Consider the following 200-residue polypeptide: GTP cyclohydrolase-2 (200 aa).

Residue 50-54 coordinates GTP; it reads RVHSE. Positions 55, 66, and 68 each coordinate Zn(2+). Residues Q71, 93 to 95, and T115 contribute to the GTP site; that span reads EGR. Catalysis depends on D127, which acts as the Proton acceptor. The Nucleophile role is filled by R129. GTP contacts are provided by T150 and K155.

The protein belongs to the GTP cyclohydrolase II family. Requires Zn(2+) as cofactor.

It catalyses the reaction GTP + 4 H2O = 2,5-diamino-6-hydroxy-4-(5-phosphoribosylamino)-pyrimidine + formate + 2 phosphate + 3 H(+). It functions in the pathway cofactor biosynthesis; riboflavin biosynthesis; 5-amino-6-(D-ribitylamino)uracil from GTP: step 1/4. Functionally, catalyzes the conversion of GTP to 2,5-diamino-6-ribosylamino-4(3H)-pyrimidinone 5'-phosphate (DARP), formate and pyrophosphate. The protein is GTP cyclohydrolase-2 of Acinetobacter baumannii (strain AB0057).